The sequence spans 191 residues: Large ribosomal subunit protein uL6A (191 aa).

It belongs to the universal ribosomal protein uL6 family. In terms of assembly, component of the large ribosomal subunit (LSU). Mature yeast ribosomes consist of a small (40S) and a large (60S) subunit. The 40S small subunit contains 1 molecule of ribosomal RNA (18S rRNA) and 33 different proteins (encoded by 57 genes). The large 60S subunit contains 3 rRNA molecules (25S, 5.8S and 5S rRNA) and 46 different proteins (encoded by 81 genes). uL6 lines the binding pocket for eukaryotic elongation factor 2 (eEF2).

It is found in the cytoplasm. Functionally, component of the ribosome, a large ribonucleoprotein complex responsible for the synthesis of proteins in the cell. The small ribosomal subunit (SSU) binds messenger RNAs (mRNAs) and translates the encoded message by selecting cognate aminoacyl-transfer RNA (tRNA) molecules. The large subunit (LSU) contains the ribosomal catalytic site termed the peptidyl transferase center (PTC), which catalyzes the formation of peptide bonds, thereby polymerizing the amino acids delivered by tRNAs into a polypeptide chain. The nascent polypeptides leave the ribosome through a tunnel in the LSU and interact with protein factors that function in enzymatic processing, targeting, and the membrane insertion of nascent chains at the exit of the ribosomal tunnel. This chain is Large ribosomal subunit protein uL6A, found in Saccharomyces cerevisiae (strain ATCC 204508 / S288c) (Baker's yeast).